Reading from the N-terminus, the 315-residue chain is Prephenate dehydratase (315 aa).

One can recognise a Prephenate dehydratase domain in the interval 7–190; the sequence is VVAYLGPAGT…ARTRFVAVQA (184 aa). An ACT domain is found at 204–283; sequence SVIFSLPNVP…LVFVGSWPSN (80 aa).

It catalyses the reaction prephenate + H(+) = 3-phenylpyruvate + CO2 + H2O. The protein operates within amino-acid biosynthesis; L-phenylalanine biosynthesis; phenylpyruvate from prephenate: step 1/1. This Corynebacterium glutamicum (strain ATCC 13032 / DSM 20300 / JCM 1318 / BCRC 11384 / CCUG 27702 / LMG 3730 / NBRC 12168 / NCIMB 10025 / NRRL B-2784 / 534) protein is Prephenate dehydratase (pheA).